The chain runs to 437 residues: Aspartokinase (437 aa).

This sequence belongs to the aspartokinase family.

It catalyses the reaction L-aspartate + ATP = 4-phospho-L-aspartate + ADP. Its pathway is amino-acid biosynthesis; L-lysine biosynthesis via DAP pathway; (S)-tetrahydrodipicolinate from L-aspartate: step 1/4. The protein operates within amino-acid biosynthesis; L-methionine biosynthesis via de novo pathway; L-homoserine from L-aspartate: step 1/3. It participates in amino-acid biosynthesis; L-threonine biosynthesis; L-threonine from L-aspartate: step 1/5. The chain is Aspartokinase (lysC) from Chlamydia muridarum (strain MoPn / Nigg).